A 473-amino-acid polypeptide reads, in one-letter code: Protein translocase subunit SecA (473 aa).

Asp127 provides a ligand contact to ATP. Residues 424-447 form a disordered region; that stretch reads VAEGKAVHQDTSKQEPKKKQPIRK. Cys457, Cys459, Cys468, and Cys469 together coordinate Zn(2+).

It belongs to the SecA family. In terms of assembly, monomer and homodimer. Part of the essential Sec protein translocation apparatus which comprises SecA, SecYEG and auxiliary proteins SecDF. Other proteins may also be involved. Zn(2+) is required as a cofactor.

The protein resides in the cell membrane. Its subcellular location is the cytoplasm. It catalyses the reaction ATP + H2O + cellular proteinSide 1 = ADP + phosphate + cellular proteinSide 2.. Part of the Sec protein translocase complex. Interacts with the SecYEG preprotein conducting channel. Has a central role in coupling the hydrolysis of ATP to the transfer of proteins into and across the cell membrane, serving as an ATP-driven molecular motor driving the stepwise translocation of polypeptide chains across the membrane. The polypeptide is Protein translocase subunit SecA (Cytobacillus firmus (Bacillus firmus)).